The primary structure comprises 310 residues: MSKILVFGHQNPDSDAIGSSMAYAYLKRQLGVDAQAVALGNPNEETAFVLDYFGIQAPPVVKSAQAEGAKQVILTDHNEFQQSIADIREVEVVEVVDHHRVANFETANPLYMRLEPVGSASSIVYRLYKENGVAIPKEIAGVMLSGLISDTLLLKSPTTHASDPAVAEDLAKIAGVDLQEYGLAMLKAGTNLASKTAAQLVDIDAKTFELNGSQVRVAQVNTVDINEVLERQNEIEEAIKASQAANGYSDFVLMITDILNSNSEILALGNNTDKVEAAFNFTLKNNHAFLAGAVSRKKQVVPQLTESFNG.

Mn(2+) is bound by residues His9, Asp13, Asp15, Asp76, His98, and Asp150.

Belongs to the PPase class C family. As to quaternary structure, homodimer. The cofactor is Mn(2+).

The protein localises to the cytoplasm. The catalysed reaction is diphosphate + H2O = 2 phosphate + H(+). The polypeptide is Probable manganese-dependent inorganic pyrophosphatase (ppaC) (Streptococcus mutans serotype c (strain ATCC 700610 / UA159)).